Consider the following 198-residue polypeptide: Zinc finger protein 41 (198 aa).

Residues 1–12 show a composition bias toward basic residues; that stretch reads MEKPATRKKKSQ. The interval 1–56 is disordered; the sequence is MEKPATRKKKSQAPKEEAGAQKATVKGEKTSKGKKATKKPRKPRRPRKEPVLSPED. Positions 13-31 are enriched in basic and acidic residues; it reads APKEEAGAQKATVKGEKTS. The segment covering 32–47 has biased composition (basic residues); it reads KGKKATKKPRKPRRPR. C2H2-type zinc fingers lie at residues 87–109, 115–137, 143–165, and 171–193; these read YECG…QRVH, FKCD…QRIH, FKCG…QKTH, and YGCE…RKRH.

The protein belongs to the krueppel C2H2-type zinc-finger protein family. In terms of tissue distribution, predominantly in the spermatocytes and spermatids of testes. It is also expressed in the fetus and embryonic stem cells at lower levels.

It is found in the nucleus. In terms of biological role, a putative DNA-binding regulatory protein associated with meiosis in spermatogenesis. This chain is Zinc finger protein 41 (Zfp41), found in Mus musculus (Mouse).